We begin with the raw amino-acid sequence, 187 residues long: UPF0340 protein SPD_0576 (187 aa).

The protein belongs to the UPF0340 family.

This is UPF0340 protein SPD_0576 from Streptococcus pneumoniae serotype 2 (strain D39 / NCTC 7466).